The chain runs to 242 residues: Pyridoxine 5'-phosphate synthase (242 aa).

A 3-amino-2-oxopropyl phosphate-binding site is contributed by N6. Position 8–9 (8–9 (DH)) interacts with 1-deoxy-D-xylulose 5-phosphate. Residue R17 participates in 3-amino-2-oxopropyl phosphate binding. Catalysis depends on H42, which acts as the Proton acceptor. Residues R44 and H49 each contribute to the 1-deoxy-D-xylulose 5-phosphate site. E69 acts as the Proton acceptor in catalysis. T99 contributes to the 1-deoxy-D-xylulose 5-phosphate binding site. H193 functions as the Proton donor in the catalytic mechanism. Residues G194 and 217 to 218 (GH) contribute to the 3-amino-2-oxopropyl phosphate site.

The protein belongs to the PNP synthase family. In terms of assembly, homooctamer; tetramer of dimers.

It localises to the cytoplasm. The catalysed reaction is 3-amino-2-oxopropyl phosphate + 1-deoxy-D-xylulose 5-phosphate = pyridoxine 5'-phosphate + phosphate + 2 H2O + H(+). It participates in cofactor biosynthesis; pyridoxine 5'-phosphate biosynthesis; pyridoxine 5'-phosphate from D-erythrose 4-phosphate: step 5/5. Functionally, catalyzes the complicated ring closure reaction between the two acyclic compounds 1-deoxy-D-xylulose-5-phosphate (DXP) and 3-amino-2-oxopropyl phosphate (1-amino-acetone-3-phosphate or AAP) to form pyridoxine 5'-phosphate (PNP) and inorganic phosphate. This is Pyridoxine 5'-phosphate synthase from Aquifex aeolicus (strain VF5).